The following is a 706-amino-acid chain: Choline transporter-like protein 2 (706 aa).

Topologically, residues 1 to 33 (MGDERPHYYGKHGTPQKYDPTFKGPIYNRGCTD) are cytoplasmic. Threonine 14 is subject to Phosphothreonine. Residues 34 to 54 (IICCVFLLLAIVGYVAVGIIA) form a helical membrane-spanning segment. The Extracellular segment spans residues 55-232 (WTHGDPRKVI…RIFEDYTVSW (178 aa)). Asparagine 187 and asparagine 200 each carry an N-linked (GlcNAc...) asparagine glycan. The chain crosses the membrane as a helical span at residues 233-253 (YWIIIGLVIAMAMSLLFIILL). Residues 254-256 (RFL) lie on the Cytoplasmic side of the membrane. The helical transmembrane segment at 257 to 277 (AGIMVWVMIIMVILVLGYGIF) threads the bilayer. The Extracellular segment spans residues 278–315 (HCYMEYSRLRGEAGSDVSLVDLGFQTDFRVYLHLRQTW). The helical transmembrane segment at 316–336 (LAFMIILSILEVIIILLLIFL) threads the bilayer. Over 337-364 (RKRILIAIALIKEASRAVGYVMCSLLYP) the chain is Cytoplasmic. A helical membrane pass occupies residues 365–385 (LVTFFLLCLCIAYWASTAVFL). Over 386–457 (STSNEAVYKI…FNAFMFFWLA (72 aa)) the chain is Extracellular. A glycan (N-linked (GlcNAc...) asparagine) is linked at asparagine 417. The chain crosses the membrane as a helical span at residues 458-480 (NFVLALGQVTLAGAFASYYWALR). The Cytoplasmic portion of the chain corresponds to 481-504 (KPDDLPAFPLFSAFGRALRYHTGS). A helical transmembrane segment spans residues 505 to 525 (LAFGALILAIVQIIRVILEYL). At 526–563 (DQRLKAAENKFAKCLMTCLKCCFWCLEKFIKFLNRNAY) the chain is on the extracellular side. A helical membrane pass occupies residues 564–584 (IMIAIYGTNFCTSARNAFFLL). Over 585–599 (MRNIIRVAVLDKVTD) the chain is Cytoplasmic. The chain crosses the membrane as a helical span at residues 600-620 (FLFLLGKLLIVGSVGILAFFF). Residues 621-638 (FTHRIRIVQDTAPPLNYY) are Extracellular-facing. Residues 639–659 (WVPILTVIVGSYLIAHGFFSV) form a helical membrane-spanning segment. Topologically, residues 660-706 (YGMCVDTLFLCFLEDLERNDGSAERPYFMSSTLKKLLNKTNKKAAES) are cytoplasmic.

The protein belongs to the CTL (choline transporter-like) family. As to quaternary structure, interacts with COCH. Present in supporting cells of the inner ear (at protein level). In terms of tissue distribution, expressed in inner ear vestibular tissue.

Its subcellular location is the cell membrane. The protein localises to the mitochondrion outer membrane. It catalyses the reaction choline(out) + n H(+)(in) = choline(in) + n H(+)(out). It carries out the reaction ethanolamine(out) + n H(+)(in) = ethanolamine(in) + n H(+)(out). Choline/H+ antiporter, mainly in mitochodria. Also acts as a low-affinity ethanolamine/H+ antiporter, regulating the supply of extracellular ethanolamine (Etn) for the CDP-Etn pathway, redistribute intracellular Etn and balance the CDP-Cho and CDP-Etn arms of the Kennedy pathway. Functionally, does not exhibit choline transporter activity. The protein is Choline transporter-like protein 2 of Homo sapiens (Human).